The primary structure comprises 3068 residues: Genome polyprotein (3068 aa).

The 144-residue stretch at 144-287 (TFRDGHMNKF…MATVTHMEQY (144 aa)) folds into the Peptidase S30 domain. Catalysis depends on for P1 proteinase activity residues histidine 195, aspartate 204, and serine 238. An Involved in interaction with stylet and aphid transmission motif is present at residues 337–340 (KLTC). The Involved in virions binding and aphid transmission motif lies at 595 to 597 (PTK). The region spanning 621–743 (LYIALDGYCY…ESEIKHYRVG (123 aa)) is the Peptidase C6 domain. Active-site for helper component proteinase activity residues include cysteine 629 and histidine 702. Positions 1228–1380 (DISISSERDF…TQFPVKLVVE (153 aa)) constitute a Helicase ATP-binding domain. 1241 to 1248 (GAVGSGKS) lines the ATP pocket. The DECH box signature appears at 1330–1333 (DECH). The Helicase C-terminal domain maps to 1399 to 1558 (DMIQYGNNLL…NLPVMSSGVS (160 aa)). The short motif at 1884-1891 (KKGKGKGT) is the Nuclear localization signal element. Tyrosine 1906 carries the O-(5'-phospho-RNA)-tyrosine modification. Residues 2031–2249 (AKTLMRGLRD…VLWGPLQLTK (219 aa)) form the Peptidase C4 domain. Active-site for nuclear inclusion protein A activity residues include histidine 2076, aspartate 2111, and cysteine 2181. The RdRp catalytic domain maps to 2518-2642 (WIYCDADGSQ…AVNPERESLL (125 aa)). The segment at 2796–2833 (SSSRSDTLDAGEEKKKNKEVATVSDGMGKKEVESTRDS) is disordered. Basic and acidic residues predominate over residues 2822–2833 (MGKKEVESTRDS). Threonine 3051 is subject to Phosphothreonine.

This sequence belongs to the potyviridae genome polyprotein family. In terms of assembly, interacts with host eIF4E protein (via cap-binding region); this interaction mediates the translation of the VPg-viral RNA conjugates. Part of a complex that comprises VPg, RNA, host EIF4E and EIF4G; this interaction mediates the translation of the VPg-viral RNA conjugates. Post-translationally, VPg is uridylylated by the polymerase and is covalently attached to the 5'-end of the genomic RNA. This uridylylated form acts as a nucleotide-peptide primer for the polymerase. Potyviral RNA is expressed as two polyproteins which undergo post-translational proteolytic processing. Genome polyprotein is processed by NIa-pro, P1 and HC-pro proteinases resulting in the production of at least ten individual proteins. P3N-PIPO polyprotein is cleaved by P1 and HC-pro proteinases resulting in the production of three individual proteins. The P1 proteinase and the HC-pro cleave only their respective C-termini autocatalytically. 6K1 is essential for proper proteolytic separation of P3 from CI.

The protein resides in the host cytoplasmic vesicle. Its subcellular location is the host nucleus. It localises to the virion. The enzyme catalyses RNA(n) + a ribonucleoside 5'-triphosphate = RNA(n+1) + diphosphate. It catalyses the reaction Hydrolyzes glutaminyl bonds, and activity is further restricted by preferences for the amino acids in P6 - P1' that vary with the species of potyvirus, e.g. Glu-Xaa-Xaa-Tyr-Xaa-Gln-|-(Ser or Gly) for the enzyme from tobacco etch virus. The natural substrate is the viral polyprotein, but other proteins and oligopeptides containing the appropriate consensus sequence are also cleaved.. It carries out the reaction Hydrolyzes a Gly-|-Gly bond at its own C-terminus, commonly in the sequence -Tyr-Xaa-Val-Gly-|-Gly, in the processing of the potyviral polyprotein.. Required for aphid transmission and also has proteolytic activity. Only cleaves a Gly-Gly dipeptide at its own C-terminus. Interacts with virions and aphid stylets. Acts as a suppressor of RNA-mediated gene silencing, also known as post-transcriptional gene silencing (PTGS), a mechanism of plant viral defense that limits the accumulation of viral RNAs. May have RNA-binding activity. Functionally, has helicase activity. It may be involved in replication. Its function is as follows. Indispensable for virus replication. Reduces the abundance of host transcripts related to jasmonic acid biosynthesis therefore altering the host defenses. In order to increase its own stability, decreases host protein degradation pathways. In terms of biological role, indispensable for virus replication. Mediates the cap-independent, EIF4E-dependent translation of viral genomic RNAs. Binds to the cap-binding site of host EIF4E and thus interferes with the host EIF4E-dependent mRNA export and translation. VPg-RNA directly binds EIF4E and is a template for transcription. Also forms trimeric complexes with EIF4E-EIF4G, which are templates for translation. Functionally, has RNA-binding and proteolytic activities. Its function is as follows. An RNA-dependent RNA polymerase that plays an essential role in the virus replication. In terms of biological role, involved in aphid transmission, cell-to-cell and systemis movement, encapsidation of the viral RNA and in the regulation of viral RNA amplification. In Pepper mottle virus (isolate California) (PeMV), this protein is Genome polyprotein.